The chain runs to 275 residues: Methyltransferase str2 (275 aa).

This sequence belongs to the methyltransferase superfamily. LaeA methyltransferase family.

It participates in mycotoxin biosynthesis. Methyltransferase; part of the gene cluster that mediates the biosynthesis of strobilurin A, an antifungal polyketide that contains a key beta-methoxyacrylate toxophore that targets the complex III of the mitochondrial electron transport chain. Strobilurin biosynthesis begins with construction of benzoyl CoA by step-wise elimination of ammonia from phenylalanine by the phenylalanine ammonia-lyase str11, oxygenation by str8 and retro-Claisen reaction to form benzoic acid, which is activated to its CoA thiolester benzoyl CoA by the dedicated CoA ligase str10. Benzoyl CoA forms the starter unit for the highly reducing polyketide synthase stpks1 that produces the polyketide prestrobilutin A. The FAD-dependent oxygenase str9 then catalyzes the key oxidative rearrangement responsible for the creation of the beta-methoxyacrylate toxophore. Str9 performs epoxidation of the 2,3 olefin of prestrobilutin A, followed by Meinwald rearrangement to furnish the aldehyde intermediate. Rapid enolization of the aldehyde intermediate would give the beta-methoxyacrylate skeleton and methylations catalyzed by str2 and str3 complete the synthesis and lead to the production of strobilurin A. The short-chain dehydrogenase stl2 and the dehydrogenase str4 play a role in the shunt pathway leading to the production of bolineol. The cluster encodes no obvious halogenase gene that could be involved in production of strobilurin B, nor any obvious dimethylallyl-transferase that could be involved in the production of strobilurin G. It is possible that unknown proteins encoded in, or near, the cluster (such as str1 or stl1) may form new classes of halogenases or dimethylally-transferases, or that the responsible genes are located elsewhere on the genome. Similarly, proteins encoded by str5/str6 hydrolases appear to have no chemical role in the biosynthesis of strobilurin A. Finally, no obvious self-resistance gene is found within the cluster. This Strobilurus tenacellus protein is Methyltransferase str2.